The sequence spans 443 residues: MSNMTPREIVHELDSHIVGQSDAKRAVAIALRNRWRRMQLDKDLRNEVTPKNILMIGPTGVGKTEIARRLAKLAHAPFIKVEATKFTEVGYVGKEVETIIRDLADMAIKMVKESEMDRVKHLAEEAAEERILDVLLPPARDGFGNDEKSDDSNTRQIFRKKLREGKLDDKEIELDLAAPQVGVEIMAPPGMEDMTSQLQNMFQNMSSEKTNKRKLKIKDALKALQEEEAAKIVNQDDIKQKAIDAVEQNGIVFIDEIDKICKRADSSGGGDVSREGVQRDLLPLVEGSTVSTKHGMIKTDHILFIASGAFQMTKPSDLIPELQGRLPIRVELQALTADDFVRILTEPFASLTEQYIALLATEGVSVTFTDDGIKAIADSAWQVNETTENIGARRLHTMMERLVEDLSFNADQRSGETISIDQAYVTKILSEVVKDEDLSRFIL.

Residues valine 18, 60-65 (GVGKTE), aspartate 255, glutamate 321, and arginine 393 contribute to the ATP site.

The protein belongs to the ClpX chaperone family. HslU subfamily. A double ring-shaped homohexamer of HslV is capped on each side by a ring-shaped HslU homohexamer. The assembly of the HslU/HslV complex is dependent on binding of ATP.

The protein localises to the cytoplasm. In terms of biological role, ATPase subunit of a proteasome-like degradation complex; this subunit has chaperone activity. The binding of ATP and its subsequent hydrolysis by HslU are essential for unfolding of protein substrates subsequently hydrolyzed by HslV. HslU recognizes the N-terminal part of its protein substrates and unfolds these before they are guided to HslV for hydrolysis. The chain is ATP-dependent protease ATPase subunit HslU from Colwellia psychrerythraea (strain 34H / ATCC BAA-681) (Vibrio psychroerythus).